A 334-amino-acid polypeptide reads, in one-letter code: Biotin synthase (334 aa).

Residues 55 to 285 (GEGGGVHACS…AHPSKIIKFA (231 aa)) enclose the Radical SAM core domain. Residues C73, C77, and C80 each contribute to the [4Fe-4S] cluster site. Residues C152, C213, and K283 each coordinate [2Fe-2S] cluster.

The protein belongs to the radical SAM superfamily. Biotin synthase family. In terms of assembly, homodimer. It depends on [4Fe-4S] cluster as a cofactor. [2Fe-2S] cluster is required as a cofactor.

The catalysed reaction is (4R,5S)-dethiobiotin + (sulfur carrier)-SH + 2 reduced [2Fe-2S]-[ferredoxin] + 2 S-adenosyl-L-methionine = (sulfur carrier)-H + biotin + 2 5'-deoxyadenosine + 2 L-methionine + 2 oxidized [2Fe-2S]-[ferredoxin]. Its pathway is cofactor biosynthesis; biotin biosynthesis; biotin from 7,8-diaminononanoate: step 2/2. Functionally, catalyzes the conversion of dethiobiotin (DTB) to biotin by the insertion of a sulfur atom into dethiobiotin via a radical-based mechanism. This is Biotin synthase from Chlorobaculum parvum (strain DSM 263 / NCIMB 8327) (Chlorobium vibrioforme subsp. thiosulfatophilum).